Consider the following 222-residue polypeptide: TPR repeat-containing protein BH2049 (222 aa).

TPR repeat units lie at residues 34-67 and 169-202; these read AEPL…NREH and PVGL…KEDK.

The polypeptide is TPR repeat-containing protein BH2049 (Halalkalibacterium halodurans (strain ATCC BAA-125 / DSM 18197 / FERM 7344 / JCM 9153 / C-125) (Bacillus halodurans)).